Consider the following 317-residue polypeptide: Serpentine receptor class delta-44 (317 aa).

The next 6 membrane-spanning stretches (helical) occupy residues 5-25 (ILSV…IILI), 90-110 (MFHI…LTTF), 130-150 (ILFI…LVII), 185-205 (RVNG…CLLL), 235-255 (IFGH…SLIT), and 264-284 (FFIF…TMYF).

Belongs to the nematode receptor-like protein srd family.

The protein resides in the membrane. In Caenorhabditis elegans, this protein is Serpentine receptor class delta-44 (srd-44).